Here is a 345-residue protein sequence, read N- to C-terminus: Probable RuBisCO transcriptional regulator (345 aa).

Residues 6–63 enclose the HTH lysR-type domain; the sequence is FTLDQLRILKAIASEGSFKRAADTLYVSQPAVSLQVQNLEKQLSVPLFDRGGRKAQLT. Residues 23–42 constitute a DNA-binding region (H-T-H motif); that stretch reads FKRAADTLYVSQPAVSLQVQ. Residues 311-345 form a disordered region; it reads LDPERLFANPYSSNNGDRQGDGKDGKGSIEIDSVT. Residues 328–339 show a composition bias toward basic and acidic residues; that stretch reads RQGDGKDGKGSI.

The protein belongs to the LysR transcriptional regulatory family.

In terms of biological role, trans-acting transcriptional regulator of RuBisCO genes (rbcL and rbcS) expression. This Synechocystis sp. (strain ATCC 27184 / PCC 6803 / Kazusa) protein is Probable RuBisCO transcriptional regulator (rbcR).